Consider the following 389-residue polypeptide: Putative teichuronic acid biosynthesis glycosyltransferase TuaC (389 aa).

Belongs to the glycosyltransferase group 1 family. Glycosyltransferase 4 subfamily.

Its pathway is cell wall biogenesis; teichuronic acid biosynthesis. The sequence is that of Putative teichuronic acid biosynthesis glycosyltransferase TuaC (tuaC) from Bacillus subtilis (strain 168).